A 179-amino-acid polypeptide reads, in one-letter code: Probable F-box protein At3g25550 (179 aa).

The F-box domain maps to 19–55 (IPNDDVLEEIIVRLPVKTLTRFQTVSKHWRHTIKSRN).

The chain is Probable F-box protein At3g25550 from Arabidopsis thaliana (Mouse-ear cress).